We begin with the raw amino-acid sequence, 120 residues long: cAMP-responsive element-binding protein-like 2 (120 aa).

Positions 1 to 24 are disordered; sequence MDDSKVVGGKVKKPGKRGRKPAKI. Residues 10–21 are compositionally biased toward basic residues; sequence KVKKPGKRGRKP. One can recognise a bZIP domain in the interval 23–86; the sequence is KIDLKAKLER…MAMDQGKIPS (64 aa). The segment at 29–60 is basic motif; it reads KLERSRQSARECRARKKLRYQYLEELVSSRER. Positions 62–69 are leucine-zipper; the sequence is ICALREEL. A disordered region spans residues 93–120; it reads TGEEQNKSQQNSSRHTKAGKTDANSNSW.

The protein belongs to the bZIP family. ATF subfamily. As to quaternary structure, interacts with CREB1; regulates CREB1 phosphorylation, stability and transcriptional activity. In terms of processing, phosphorylated by AMPK.

The protein resides in the nucleus. Probable regulator of CREB1 transcriptional activity which is involved in adipose cells differentiation. May also play a regulatory role in the cell cycle. Identification in a chromosomal region frequently deleted in various cancers suggests that it might act as a tumor suppressor. The sequence is that of cAMP-responsive element-binding protein-like 2 (CREBL2) from Homo sapiens (Human).